A 152-amino-acid polypeptide reads, in one-letter code: Transcriptional repressor NrdR (152 aa).

The segment at 3–34 (CPFCSTEETKVIDSRLVSEGYQVRRRRECTNC) is a zinc-finger region. The region spanning 49 to 139 (PKIVKTDGYR…VYLSFENINE (91 aa)) is the ATP-cone domain.

This sequence belongs to the NrdR family. Requires Zn(2+) as cofactor.

Its function is as follows. Negatively regulates transcription of bacterial ribonucleotide reductase nrd genes and operons by binding to NrdR-boxes. This chain is Transcriptional repressor NrdR, found in Actinobacillus succinogenes (strain ATCC 55618 / DSM 22257 / CCUG 43843 / 130Z).